Reading from the N-terminus, the 164-residue chain is D-aminoacyl-tRNA deacylase (164 aa).

2 residues coordinate tRNA: Trp-72 and Phe-89. The Nucleophile role is filled by Thr-90. Positions 104–107 (HLAK) match the C-terminal adenosine nucleotide of tRNA motif. Positions 149–150 (GP) match the Gly-cisPro motif, allows the protein to recognize chirality of D-amino acids motif.

This sequence belongs to the DTD family. Homodimer.

The protein resides in the cytoplasm. It catalyses the reaction glycyl-tRNA(Ala) + H2O = tRNA(Ala) + glycine + H(+). The enzyme catalyses a D-aminoacyl-tRNA + H2O = a tRNA + a D-alpha-amino acid + H(+). It carries out the reaction D-tyrosyl-tRNA(Tyr) + H2O = D-tyrosine + tRNA(Tyr). D-aminoacyl-tRNA deacylase, with no observable activity on tRNAs charged with their cognate L-amino acid. Probably acts by rejecting L-amino acids from its binding site rather than specific recognition of D-amino acids. Catalyzes the hydrolysis of D-tyrosyl-tRNA(Tyr), has no activity on correctly charged L-tyrosyl-tRNA(Tyr). Hydrolyzes correctly charged, achiral, glycyl-tRNA(Gly). Deacylates mischarged D.melanogaster and E.coli glycyl-tRNA(Ala). Probably acts via tRNA-based rather than protein-based catalysis. Acts on tRNAs only when the D-amino acid is either attached to the ribose 3'-OH or transferred to the 3'-OH from the 2'-OH through rapid transesterification. Binds a number of other D-amino acids (D-Arg, D-Glu, D-His, D-Lys, D-Ser), suggesting it may also deacylate other mischarged tRNAs. The protein is D-aminoacyl-tRNA deacylase of Plasmodium falciparum (isolate 3D7).